We begin with the raw amino-acid sequence, 689 residues long: Glycine--tRNA ligase beta subunit (689 aa).

The protein belongs to the class-II aminoacyl-tRNA synthetase family. As to quaternary structure, tetramer of two alpha and two beta subunits.

It is found in the cytoplasm. It carries out the reaction tRNA(Gly) + glycine + ATP = glycyl-tRNA(Gly) + AMP + diphosphate. The sequence is that of Glycine--tRNA ligase beta subunit from Aeromonas salmonicida (strain A449).